Here is a 243-residue protein sequence, read N- to C-terminus: Ribosomal RNA small subunit methyltransferase G (243 aa).

Residues Gly79, Phe84, 130-131 (AE), and Arg150 contribute to the S-adenosyl-L-methionine site. Residues 222–243 (KPTPNKYPRKPGIPNKQPLGGA) are disordered.

It belongs to the methyltransferase superfamily. RNA methyltransferase RsmG family.

Its subcellular location is the cytoplasm. Functionally, specifically methylates the N7 position of a guanine in 16S rRNA. The protein is Ribosomal RNA small subunit methyltransferase G of Lacticaseibacillus paracasei (strain ATCC 334 / BCRC 17002 / CCUG 31169 / CIP 107868 / KCTC 3260 / NRRL B-441) (Lactobacillus paracasei).